The chain runs to 456 residues: Ribonuclease inhibitor (456 aa).

N-acetylmethionine is present on Met1. LRR repeat units follow at residues 15–43, 44–71, 72–100, 101–128, 129–157, 158–185, 186–214, 215–242, 243–271, 272–299, 300–328, 329–356, 357–385, 386–413, and 414–442; these read WTEL…CKDI, GSAL…VHLV, LQGL…CGVL, PSTL…LRLL, CEGL…CEPL, ASVL…ARVL, GQGL…CKDL, CGIV…IAEL, CPGL…CRDL, CRVL…ARLL, CESL…CQHV, SLML…IQEL, CQAL…CSSL, ASLL…VLQL, and LGSL…EDRL. Residue Ser86 is modified to Phosphoserine.

In terms of assembly, forms high-affinity heterodimers with RNASE1, ANG and RNASE2.

The protein localises to the cytoplasm. Its subcellular location is the nucleus. Its function is as follows. Ribonuclease inhibitor which inhibits RNASE1, RNASE2 and angiogenin (ANG). May play a role in redox homeostasis. Required to inhibit the cytotoxic tRNA ribonuclease activity of ANG in the cytoplasm in absence of stress. Relocates to the nucleus in response to stress, relieving inhibition of ANG in the cytoplasm, and inhibiting the angiogenic activity of ANG in the nucleus. The polypeptide is Ribonuclease inhibitor (RNH1) (Sus scrofa (Pig)).